A 487-amino-acid polypeptide reads, in one-letter code: UDP-N-acetylmuramoyl-L-alanyl-D-glutamate--2,6-diaminopimelate ligase (487 aa).

Positions 23 and 25 each coordinate UDP-N-acetyl-alpha-D-muramoyl-L-alanyl-D-glutamate. 108-114 (GTNGKTS) contacts ATP. UDP-N-acetyl-alpha-D-muramoyl-L-alanyl-D-glutamate contacts are provided by residues 150 to 151 (TT), Ser-177, Gln-183, and Arg-185. At Lys-217 the chain carries N6-carboxylysine. Residues Arg-378, 402–405 (DNPR), Gly-453, and Glu-457 each bind meso-2,6-diaminopimelate. The Meso-diaminopimelate recognition motif signature appears at 402 to 405 (DNPR).

The protein belongs to the MurCDEF family. MurE subfamily. Mg(2+) serves as cofactor. In terms of processing, carboxylation is probably crucial for Mg(2+) binding and, consequently, for the gamma-phosphate positioning of ATP.

It localises to the cytoplasm. It catalyses the reaction UDP-N-acetyl-alpha-D-muramoyl-L-alanyl-D-glutamate + meso-2,6-diaminopimelate + ATP = UDP-N-acetyl-alpha-D-muramoyl-L-alanyl-gamma-D-glutamyl-meso-2,6-diaminopimelate + ADP + phosphate + H(+). It participates in cell wall biogenesis; peptidoglycan biosynthesis. Functionally, catalyzes the addition of meso-diaminopimelic acid to the nucleotide precursor UDP-N-acetylmuramoyl-L-alanyl-D-glutamate (UMAG) in the biosynthesis of bacterial cell-wall peptidoglycan. The sequence is that of UDP-N-acetylmuramoyl-L-alanyl-D-glutamate--2,6-diaminopimelate ligase from Pseudomonas syringae pv. tomato (strain ATCC BAA-871 / DC3000).